We begin with the raw amino-acid sequence, 262 residues long: Cytochrome c oxidase subunit 3 (262 aa).

7 consecutive transmembrane segments (helical) span residues 16-36 (PWPL…VQWF), 42-59 (TLFL…YQWW), 83-103 (GMIL…WAFF), 128-148 (FQIP…VTWA), 163-183 (SLFF…YEYI), 198-218 (FFVA…FLLI), and 240-260 (AWYW…IYWW).

Belongs to the cytochrome c oxidase subunit 3 family. Component of the cytochrome c oxidase (complex IV, CIV), a multisubunit enzyme composed of a catalytic core of 3 subunits and several supernumerary subunits. The complex exists as a monomer or a dimer and forms supercomplexes (SCs) in the inner mitochondrial membrane with ubiquinol-cytochrome c oxidoreductase (cytochrome b-c1 complex, complex III, CIII).

It localises to the mitochondrion inner membrane. The catalysed reaction is 4 Fe(II)-[cytochrome c] + O2 + 8 H(+)(in) = 4 Fe(III)-[cytochrome c] + 2 H2O + 4 H(+)(out). In terms of biological role, component of the cytochrome c oxidase, the last enzyme in the mitochondrial electron transport chain which drives oxidative phosphorylation. The respiratory chain contains 3 multisubunit complexes succinate dehydrogenase (complex II, CII), ubiquinol-cytochrome c oxidoreductase (cytochrome b-c1 complex, complex III, CIII) and cytochrome c oxidase (complex IV, CIV), that cooperate to transfer electrons derived from NADH and succinate to molecular oxygen, creating an electrochemical gradient over the inner membrane that drives transmembrane transport and the ATP synthase. Cytochrome c oxidase is the component of the respiratory chain that catalyzes the reduction of oxygen to water. Electrons originating from reduced cytochrome c in the intermembrane space (IMS) are transferred via the dinuclear copper A center (CU(A)) of subunit 2 and heme A of subunit 1 to the active site in subunit 1, a binuclear center (BNC) formed by heme A3 and copper B (CU(B)). The BNC reduces molecular oxygen to 2 water molecules using 4 electrons from cytochrome c in the IMS and 4 protons from the mitochondrial matrix. This is Cytochrome c oxidase subunit 3 from Aedes aegypti (Yellowfever mosquito).